Consider the following 330-residue polypeptide: Methionyl-tRNA formyltransferase (330 aa).

112–115 (SLLP) provides a ligand contact to (6S)-5,6,7,8-tetrahydrofolate.

This sequence belongs to the Fmt family.

The enzyme catalyses L-methionyl-tRNA(fMet) + (6R)-10-formyltetrahydrofolate = N-formyl-L-methionyl-tRNA(fMet) + (6S)-5,6,7,8-tetrahydrofolate + H(+). Its function is as follows. Attaches a formyl group to the free amino group of methionyl-tRNA(fMet). The formyl group appears to play a dual role in the initiator identity of N-formylmethionyl-tRNA by promoting its recognition by IF2 and preventing the misappropriation of this tRNA by the elongation apparatus. The sequence is that of Methionyl-tRNA formyltransferase from Alcanivorax borkumensis (strain ATCC 700651 / DSM 11573 / NCIMB 13689 / SK2).